The primary structure comprises 126 residues: Small ribosomal subunit protein uS12 (126 aa).

Position 89 is a 3-methylthioaspartic acid (Asp89).

This sequence belongs to the universal ribosomal protein uS12 family. Part of the 30S ribosomal subunit. Contacts proteins S8 and S17. May interact with IF1 in the 30S initiation complex.

Its function is as follows. With S4 and S5 plays an important role in translational accuracy. Interacts with and stabilizes bases of the 16S rRNA that are involved in tRNA selection in the A site and with the mRNA backbone. Located at the interface of the 30S and 50S subunits, it traverses the body of the 30S subunit contacting proteins on the other side and probably holding the rRNA structure together. The combined cluster of proteins S8, S12 and S17 appears to hold together the shoulder and platform of the 30S subunit. In Polynucleobacter necessarius subsp. necessarius (strain STIR1), this protein is Small ribosomal subunit protein uS12.